A 225-amino-acid polypeptide reads, in one-letter code: Probable proteasome subunit beta type-6 (225 aa).

The protein belongs to the peptidase T1B family. As to quaternary structure, the 26S proteasome consists of a 20S proteasome core and two 19S regulatory subunits. The 20S proteasome core is composed of 28 subunits that are arranged in four stacked rings, resulting in a barrel-shaped structure. The two end rings are each formed by seven alpha subunits, and the two central rings are each formed by seven beta subunits. The catalytic chamber with the active sites is on the inside of the barrel.

Its subcellular location is the cytoplasm. It is found in the nucleus. Non-catalytic component of the proteasome, a multicatalytic proteinase complex which is characterized by its ability to cleave peptides with Arg, Phe, Tyr, Leu, and Glu adjacent to the leaving group at neutral or slightly basic pH. The proteasome has an ATP-dependent proteolytic activity. This Schizosaccharomyces pombe (strain 972 / ATCC 24843) (Fission yeast) protein is Probable proteasome subunit beta type-6 (pam1).